Consider the following 416-residue polypeptide: Enolase (416 aa).

Residue Q160 participates in (2R)-2-phosphoglycerate binding. E204 serves as the catalytic Proton donor. Mg(2+)-binding residues include D239, E282, and D308. (2R)-2-phosphoglycerate contacts are provided by K333, R362, S363, and K384. Residue K333 is the Proton acceptor of the active site.

This sequence belongs to the enolase family. It depends on Mg(2+) as a cofactor.

Its subcellular location is the cytoplasm. The protein resides in the secreted. It is found in the cell surface. The catalysed reaction is (2R)-2-phosphoglycerate = phosphoenolpyruvate + H2O. The protein operates within carbohydrate degradation; glycolysis; pyruvate from D-glyceraldehyde 3-phosphate: step 4/5. In terms of biological role, catalyzes the reversible conversion of 2-phosphoglycerate (2-PG) into phosphoenolpyruvate (PEP). It is essential for the degradation of carbohydrates via glycolysis. The protein is Enolase of Metallosphaera sedula (strain ATCC 51363 / DSM 5348 / JCM 9185 / NBRC 15509 / TH2).